A 193-amino-acid polypeptide reads, in one-letter code: Pyridoxal 5'-phosphate synthase subunit PdxT (193 aa).

50–52 (GES) is an L-glutamine binding site. Residue Cys82 is the Nucleophile of the active site. Residues Arg109 and 136-137 (IR) contribute to the L-glutamine site. Active-site charge relay system residues include His172 and Glu174.

It belongs to the glutaminase PdxT/SNO family. As to quaternary structure, in the presence of PdxS, forms a dodecamer of heterodimers. Only shows activity in the heterodimer.

It carries out the reaction aldehydo-D-ribose 5-phosphate + D-glyceraldehyde 3-phosphate + L-glutamine = pyridoxal 5'-phosphate + L-glutamate + phosphate + 3 H2O + H(+). It catalyses the reaction L-glutamine + H2O = L-glutamate + NH4(+). The protein operates within cofactor biosynthesis; pyridoxal 5'-phosphate biosynthesis. Functionally, catalyzes the hydrolysis of glutamine to glutamate and ammonia as part of the biosynthesis of pyridoxal 5'-phosphate. The resulting ammonia molecule is channeled to the active site of PdxS. This Streptococcus pneumoniae serotype 19F (strain G54) protein is Pyridoxal 5'-phosphate synthase subunit PdxT.